The chain runs to 58 residues: DNA-binding protein (58 aa).

Composition is skewed to basic residues over residues 1–19 (MVRR…RSRS) and 28–58 (SRYR…NQYI). The tract at residues 1 to 58 (MVRRRRSRSPYRRRSRSRSRSGSDRSRSRYRSRSRSRSRSRSRARSRSPYHHHINQYI) is disordered.

Post-translationally, probably phosphorylated in infected cells.

The protein localises to the virion. Thought to be responsible for DNA condensation during packaging of the nucleocapsids. This chain is DNA-binding protein (P7.3), found in Cryptophlebia leucotreta granulosis virus (ClGV).